The following is a 456-amino-acid chain: uncharacterized protein (456 aa).

Over residues 415–428 (SNSNGSSSSGNSSS) the composition is skewed to low complexity. Residues 415 to 444 (SNSNGSSSSGNSSSIYNSHLMNDKKKNNNA) form a disordered region.

This is an uncharacterized protein from Saccharomyces cerevisiae (strain ATCC 204508 / S288c) (Baker's yeast).